Consider the following 106-residue polypeptide: MSLAARRKVRIRLYGTNPADVEQVAREIVDLAKKMGVQVKGPIPLPTRRLVVTVRRAPSGQGYHTFDHWELRISKRLIDIEASERVLRRLMTIRVPDTVKIELQLI.

Belongs to the universal ribosomal protein uS10 family. As to quaternary structure, part of the 30S ribosomal subunit.

Its function is as follows. Involved in the binding of tRNA to the ribosomes. This Pyrobaculum islandicum (strain DSM 4184 / JCM 9189 / GEO3) protein is Small ribosomal subunit protein uS10.